The primary structure comprises 1374 residues: Tonsoku-like protein (1374 aa).

TPR repeat units lie at residues 27-60 (ASVC…LETT), 67-100 (AVAH…ACAL), 107-140 (QRAW…FEKS), 162-195 (TRIY…AEQN), 202-235 (FRAR…ARVL), 242-275 (SECC…GSQK), 311-344 (MGIC…AELL), and 352-385 (AVIH…QEGN). Positions 460–508 (KAAGDEDEGDGEDEEDEEDDDALEATELELSESENEADASPPLEEDEEL) are disordered. Residues 464-507 (DEDEGDGEDEEDEEDDDALEATELELSESENEADASPPLEEDEE) are compositionally biased toward acidic residues. ANK repeat units lie at residues 526-558 (VGET…PRDY), 559-591 (CGWT…DPGG), and 595-627 (DGIT…LRTR). Residues 668 to 777 (GRAPHSSQAP…ASDREAATTS (110 aa)) are disordered. Residues 672–682 (HSSQAPQTLPS) are compositionally biased toward polar residues. The segment covering 690–699 (TSPPSSPCPG) has biased composition (pro residues). A Phosphoserine modification is found at Ser711. Over residues 731–744 (SSSSSEGEDSAGPS) the composition is skewed to low complexity. Residue Arg788 is modified to Omega-N-methylarginine. Residues 829–908 (EEDFPMSPGH…PARSPDVPRV (80 aa)) form a disordered region. LRR repeat units lie at residues 1065 to 1089 (HSAL…LLAT), 1093 to 1121 (VPGL…LLGQ), 1124 to 1147 (LQNL…ALAS), 1184 to 1207 (TKCL…PVLG), 1243 to 1266 (GCVL…ALSR), 1271 to 1296 (CPSL…LLST), and 1327 to 1350 (VAQL…ALHQ).

It belongs to the Tonsoku family. Component of the MMS22L-TONSL complex, a complex at least composed of MMS22L and TONSL/NFKBIL2. Interacts with the MCM complex, the FACT complex and the RPA complex. Interacts with MCM5; the interaction is direct. Binds histones, with a strong preference for histone H3.1 (histones H3.1 and H3-4/H3.1t). Interacts (via ANK repeats) with histone H4; specifically binds histone H4 lacking methylation at 'Lys-20' (H4K20me0). May interact with DNAJC9; the interaction seems to be histone-dependent.

Its subcellular location is the nucleus. It is found in the chromosome. The protein localises to the cytoplasm. Component of the MMS22L-TONSL complex, a complex that promotes homologous recombination-mediated repair of double-strand breaks (DSBs) at stalled or collapsed replication forks. The MMS22L-TONSL complex is required to maintain genome integrity during DNA replication. It mediates the assembly of RAD51 filaments on single-stranded DNA (ssDNA): the MMS22L-TONSL complex is recruited to DSBs following histone replacement by histone chaperones and eviction of the replication protein A complex (RPA/RP-A) from DSBs. Following recruitment to DSBs, the TONSL-MMS22L complex promotes recruitment of RAD51 filaments and subsequent homologous recombination. Within the complex, TONSL acts as a histone reader, which recognizes and binds newly synthesized histones following their replacement by histone chaperones. Specifically binds histone H4 lacking methylation at 'Lys-20' (H4K20me0) and histone H3.1. This Bos taurus (Bovine) protein is Tonsoku-like protein (TONSL).